The primary structure comprises 333 residues: 4-hydroxy-3-methylbut-2-enyl diphosphate reductase (333 aa).

Residue cysteine 34 coordinates [4Fe-4S] cluster. Positions 63 and 96 each coordinate (2E)-4-hydroxy-3-methylbut-2-enyl diphosphate. Residues histidine 63 and histidine 96 each contribute to the dimethylallyl diphosphate site. Isopentenyl diphosphate is bound by residues histidine 63 and histidine 96. Cysteine 118 contacts [4Fe-4S] cluster. Histidine 146 serves as a coordination point for (2E)-4-hydroxy-3-methylbut-2-enyl diphosphate. Dimethylallyl diphosphate is bound at residue histidine 146. An isopentenyl diphosphate-binding site is contributed by histidine 146. The Proton donor role is filled by glutamate 148. Residue threonine 186 coordinates (2E)-4-hydroxy-3-methylbut-2-enyl diphosphate. Cysteine 216 serves as a coordination point for [4Fe-4S] cluster. The (2E)-4-hydroxy-3-methylbut-2-enyl diphosphate site is built by serine 244, serine 245, asparagine 246, and serine 289. Residues serine 244, serine 245, asparagine 246, and serine 289 each coordinate dimethylallyl diphosphate. Residues serine 244, serine 245, asparagine 246, and serine 289 each coordinate isopentenyl diphosphate.

It belongs to the IspH family. [4Fe-4S] cluster serves as cofactor.

It catalyses the reaction isopentenyl diphosphate + 2 oxidized [2Fe-2S]-[ferredoxin] + H2O = (2E)-4-hydroxy-3-methylbut-2-enyl diphosphate + 2 reduced [2Fe-2S]-[ferredoxin] + 2 H(+). The catalysed reaction is dimethylallyl diphosphate + 2 oxidized [2Fe-2S]-[ferredoxin] + H2O = (2E)-4-hydroxy-3-methylbut-2-enyl diphosphate + 2 reduced [2Fe-2S]-[ferredoxin] + 2 H(+). It participates in isoprenoid biosynthesis; dimethylallyl diphosphate biosynthesis; dimethylallyl diphosphate from (2E)-4-hydroxy-3-methylbutenyl diphosphate: step 1/1. The protein operates within isoprenoid biosynthesis; isopentenyl diphosphate biosynthesis via DXP pathway; isopentenyl diphosphate from 1-deoxy-D-xylulose 5-phosphate: step 6/6. In terms of biological role, catalyzes the conversion of 1-hydroxy-2-methyl-2-(E)-butenyl 4-diphosphate (HMBPP) into a mixture of isopentenyl diphosphate (IPP) and dimethylallyl diphosphate (DMAPP). Acts in the terminal step of the DOXP/MEP pathway for isoprenoid precursor biosynthesis. The chain is 4-hydroxy-3-methylbut-2-enyl diphosphate reductase from Mycobacterium sp. (strain JLS).